A 271-amino-acid polypeptide reads, in one-letter code: ATP synthase subunit a (271 aa).

5 helical membrane-spanning segments follow: residues 47-67 (WENI…AYLG), 107-127 (FLGT…VPLM), 133-153 (SLNI…FLNI), 209-229 (ILIG…ETFV), and 235-255 (LPFM…FTLL).

It belongs to the ATPase A chain family. F-type ATPases have 2 components, CF(1) - the catalytic core - and CF(0) - the membrane proton channel. CF(1) has five subunits: alpha(3), beta(3), gamma(1), delta(1), epsilon(1). CF(0) has three main subunits: a(1), b(2) and c(9-12). The alpha and beta chains form an alternating ring which encloses part of the gamma chain. CF(1) is attached to CF(0) by a central stalk formed by the gamma and epsilon chains, while a peripheral stalk is formed by the delta and b chains.

Its subcellular location is the cell inner membrane. Its function is as follows. Key component of the proton channel; it plays a direct role in the translocation of protons across the membrane. This chain is ATP synthase subunit a, found in Protochlamydia amoebophila (strain UWE25).